Consider the following 37-residue polypeptide: Photosystem II reaction center protein T (37 aa).

A helical membrane pass occupies residues 3-23 (ALVYTFLLVSTLGIIFFAIFF).

The protein belongs to the PsbT family. As to quaternary structure, PSII is composed of 1 copy each of membrane proteins PsbA, PsbB, PsbC, PsbD, PsbE, PsbF, PsbH, PsbI, PsbJ, PsbK, PsbL, PsbM, PsbT, PsbY, PsbZ, Psb30/Ycf12, at least 3 peripheral proteins of the oxygen-evolving complex and a large number of cofactors. It forms dimeric complexes.

The protein localises to the plastid. The protein resides in the chloroplast thylakoid membrane. Found at the monomer-monomer interface of the photosystem II (PS II) dimer, plays a role in assembly and dimerization of PSII. PSII is a light-driven water plastoquinone oxidoreductase, using light energy to abstract electrons from H(2)O, generating a proton gradient subsequently used for ATP formation. The chain is Photosystem II reaction center protein T from Cucumis sativus (Cucumber).